The following is a 642-amino-acid chain: Frizzled and smoothened-like protein B (642 aa).

Positions 1 to 26 are cleaved as a signal peptide; the sequence is MFNKNNNNNKIIIILKLFLIILIVNN. The Extracellular segment spans residues 27 to 264; that stretch reads NNNIKTFGLN…KWHQMYNMSK (238 aa). The 151-residue stretch at 47–197 folds into the FZ domain; it reads DPTATCSNYI…GFFPVPCSDP (151 aa). Cystine bridges form between C52–C123, C65–C116, and C143–C194. Residues N80, N153, N162, N177, N203, N222, and N261 are each glycosylated (N-linked (GlcNAc...) asparagine). A helical membrane pass occupies residues 265–285; that stretch reads ILSTISFVCSIYNVLTFGILN. Over 286–294 the chain is Cytoplasmic; that stretch reads HRRSKYNYC. A helical transmembrane segment spans residues 295-315; the sequence is ITFFSASVIIITMMDIVTYGI. The Extracellular segment spans residues 316 to 344; that stretch reads GYEKLLCPEPGRFAVQSDVSCGATGALFH. A helical membrane pass occupies residues 345-365; that stretch reads IGITNGVFWWTTMSICLFAVV. At 366–375 the chain is on the cytoplasmic side; that stretch reads KRIKLFDFRY. The chain crosses the membrane as a helical span at residues 376–398; that stretch reads FIIFNTTASLISVIIPLAGNAFM. Residues 399 to 416 are Extracellular-facing; the sequence is AGTGSLACWIRKTWYVNS. A helical membrane pass occupies residues 417–437; sequence VFWIPCGIALTIGSVCIILVI. Residues 438-460 are Cytoplasmic-facing; the sequence is YEIYKITKNVSTKDNRMILLQIK. The helical transmembrane segment at 461 to 481 threads the bilayer; sequence PFLCVTLVGGSFYYLFIFNFD. N482 is a glycosylation site (N-linked (GlcNAc...) asparagine). The Extracellular segment spans residues 482 to 514; that stretch reads NESHSKEYKEKVVDYVMCLLSDTGKECLMAGPN. Residues 515–535 form a helical membrane-spanning segment; it reads YVAYFVFYFFIRLFGITFFCI. Residues 536 to 642 lie on the Cytoplasmic side of the membrane; that stretch reads YGTSQNARDI…INSASNTSSD (107 aa). The tract at residues 578-642 is disordered; the sequence is GTNPTSNSKN…INSASNTSSD (65 aa). Over residues 583–598 the composition is skewed to low complexity; sequence SNSKNSKNNQNNQNNN. Residues 584 to 611 are a coiled coil; the sequence is NSKNSKNNQNNQNNNSRKEFESKNIELE. Over residues 599-609 the composition is skewed to basic and acidic residues; sequence SRKEFESKNIE. 2 stretches are compositionally biased toward polar residues: residues 614–623 and 632–642; these read ESISKGQTTR and NINSASNTSSD.

It belongs to the G-protein coupled receptor Fz/Smo family.

The protein resides in the membrane. This Dictyostelium discoideum (Social amoeba) protein is Frizzled and smoothened-like protein B (fslB).